Consider the following 247-residue polypeptide: PF03932 family protein CutC (247 aa).

Residues 205 to 222 are compositionally biased toward polar residues; that stretch reads KSTRPSLMESNSSAQMGS. Residues 205–226 form a disordered region; sequence KSTRPSLMESNSSAQMGSNDVD.

Belongs to the CutC family.

The protein localises to the cytoplasm. The protein is PF03932 family protein CutC of Vibrio atlanticus (strain LGP32) (Vibrio splendidus (strain Mel32)).